The following is an 88-amino-acid chain: Small ribosomal subunit protein bS20 (88 aa).

The disordered stretch occupies residues 1–27 (MANSKSAKKRALQSEKRRQHNASRRSM).

Belongs to the bacterial ribosomal protein bS20 family.

In terms of biological role, binds directly to 16S ribosomal RNA. The chain is Small ribosomal subunit protein bS20 from Shewanella baltica (strain OS223).